The sequence spans 85 residues: Conotoxin Lv15a (85 aa).

Positions 1 to 23 are cleaved as a signal peptide; that stretch reads MEKLTVLILVATVLLMIQVLAQS. Positions 24-49 are excised as a propeptide; that stretch reads GGDKHLKRRPKQYATKRLSALMRGHR. A Pyrrolidone carboxylic acid modification is found at glutamine 50.

This sequence belongs to the conotoxin O2 superfamily. Contains 4 disulfide bonds. As to expression, expressed by the venom duct.

It localises to the secreted. The sequence is that of Conotoxin Lv15a from Conus lividus (Livid cone).